A 195-amino-acid polypeptide reads, in one-letter code: MSETKPKRDSEYEGSNIKRMRLDDDDDVLRSPTRTLSSSSSSSLAYSVSDSGGFCSVALSEEEDDHLSSSISSGCSSSETNEIATRLPFSDLEAHEISETEISTLLTNNFRKQGISSSENLGETAEMDSATTEMRDQRKTEKKKKMEKSPTQAELDDFFSAAERYEQKRFTEKYNYDIVNDTPLEGRYQWVSLKP.

Basic and acidic residues predominate over residues Met-1–Glu-11. 3 disordered regions span residues Met-1–Asp-50, Glu-61–Thr-80, and Ser-117–Glu-154. Low complexity-rich tracts occupy residues Ser-37–Asp-50 and Ser-68–Thr-80. At Thr-151 the chain carries Phosphothreonine; by KIN10.

Belongs to the CDI family. ICK/KRP subfamily. In terms of assembly, specifically interacts with CDKA-1, but not with CDKB1-1. Interacts with CYCD4-1. Binds to FBL17. Ubiquitinated by SCF(FBL17). Ubiquitination leads to its subsequent degradation, thus controlling cell cycle progression. As to expression, expressed in flowers, in developing pollen, and at lower levels in roots and leaves.

The protein resides in the nucleus. It localises to the nucleoplasm. In terms of biological role, binds and inhibits CYCD2-1/CDKA-1 complex kinase activity. May target specifically CDKA-1. This is Cyclin-dependent kinase inhibitor 7 (KRP7) from Arabidopsis thaliana (Mouse-ear cress).